Reading from the N-terminus, the 345-residue chain is MDLGPIYNTRDINDGKVINIDNPNYTNPVAIKKNENNNAYQFNHLKTLGLYIQNTTYFTDNFIITGGLRYEYFDQVVGRSTLKNIRSGYLAQKDGKLLYQLGSVYKFTPNIATFFNHAESFRPQNNRTLIINGELPAEQGKSFETGLKYENAYLNATVALFNINKRNVAETVNVNGTNELQIVGKQRSRGIEFDLNGQLTDNLSIAANYTYTKVKNLENHNNKLAVGKQLSGVPKHQASLFLAYNIGEFDFGNIRVGGGARYLGSWYAYNNTYTKAYKLPQAIVYDTFIAYDTKISGKKVSFQLNGKNLSNKVYSPSTSGNASRTLIPVALGYAREVILNTKIEF.

Position 1 (M1) is a domain, TBDR plug. The 345-residue stretch at 1–345 folds into the TBDR beta-barrel domain; it reads MDLGPIYNTR…EVILNTKIEF (345 aa). The TonB C-terminal box motif lies at 328–345; it reads PVALGYAREVILNTKIEF.

The protein belongs to the TonB-dependent receptor family.

It is found in the cell outer membrane. This is an uncharacterized protein from Haemophilus influenzae (strain ATCC 51907 / DSM 11121 / KW20 / Rd).